A 354-amino-acid chain; its full sequence is 3-isopropylmalate dehydrogenase (354 aa).

76-87 (GPRWDSAKERPE) is a binding site for NAD(+). Residues R94, R104, R130, and D215 each contribute to the substrate site. Residues D215, D239, and D243 each coordinate Mg(2+). 273–285 (GSAPDIAGKNKAN) contacts NAD(+).

The protein belongs to the isocitrate and isopropylmalate dehydrogenases family. LeuB type 1 subfamily. As to quaternary structure, homodimer. Mg(2+) is required as a cofactor. The cofactor is Mn(2+).

The protein resides in the cytoplasm. It carries out the reaction (2R,3S)-3-isopropylmalate + NAD(+) = 4-methyl-2-oxopentanoate + CO2 + NADH. Its pathway is amino-acid biosynthesis; L-leucine biosynthesis; L-leucine from 3-methyl-2-oxobutanoate: step 3/4. Catalyzes the oxidation of 3-carboxy-2-hydroxy-4-methylpentanoate (3-isopropylmalate) to 3-carboxy-4-methyl-2-oxopentanoate. The product decarboxylates to 4-methyl-2 oxopentanoate. This chain is 3-isopropylmalate dehydrogenase, found in Bacillus cereus (strain ATCC 10987 / NRS 248).